The chain runs to 147 residues: Globin (147 aa).

Residues 1 to 147 (GLSAEQKTAL…LLGVLIENHQ (147 aa)) enclose the Globin domain. The heme b site is built by His66 and His98.

It belongs to the globin family. As to quaternary structure, homodimer.

The chain is Globin from Tritia mutabilis (Sea snail).